The following is an 825-amino-acid chain: Ubiquitin carboxyl-terminal hydrolase 16 (825 aa).

The segment at 1–20 is disordered; that stretch reads MGKKRTKGRSAPDTVASESA. The UBP-type zinc finger occupies 22–141; it reads PVCRHLRKGL…QVVDYVRKQA (120 aa). Residues cysteine 24, histidine 26, cysteine 48, cysteine 51, cysteine 73, cysteine 76, cysteine 81, histidine 89, histidine 93, histidine 102, cysteine 115, and cysteine 118 each coordinate Zn(2+). A Glycyl lysine isopeptide (Lys-Gly) (interchain with G-Cter in SUMO2) cross-link involves residue lysine 139. Over residues 164-180 the composition is skewed to basic and acidic residues; that stretch reads EKESKNEQEREKSENLA. Residues 164 to 184 form a disordered region; the sequence is EKESKNEQEREKSENLAKETI. Position 188 is a phosphoserine (serine 188). Residues 195 to 824 enclose the USP domain; the sequence is KGLSNLGNTC…QAYLLFYERI (630 aa). Residue cysteine 204 is the Nucleophile of the active site. A compositionally biased stretch (basic and acidic residues) spans 393-407; sequence SGKKSINDKNVKMTM. The disordered stretch occupies residues 393 to 456; that stretch reads SGKKSINDKN…KQAKNQRRQQ (64 aa). Residues 408–419 show a composition bias toward acidic residues; it reads EEEDKDSEEEKD. Serine 414 is subject to Phosphoserine. Basic residues predominate over residues 436-456; that stretch reads HLQKKAKKQAKKQAKNQRRQQ. Serine 520 and serine 531 each carry phosphoserine. Residue histidine 759 is the Proton acceptor of the active site.

This sequence belongs to the peptidase C19 family. USP16 subfamily. In terms of assembly, homotetramer. Associates with late pre-40S ribosomes. Interacts with CEP78; promoting deubiquitination of tektins. In terms of processing, phosphorylated at the onset of mitosis and dephosphorylated during the metaphase/anaphase transition. Phosphorylation by AURKB enhances the deubiquitinase activity.

Its subcellular location is the nucleus. The protein resides in the cytoplasm. It carries out the reaction Thiol-dependent hydrolysis of ester, thioester, amide, peptide and isopeptide bonds formed by the C-terminal Gly of ubiquitin (a 76-residue protein attached to proteins as an intracellular targeting signal).. In terms of biological role, specifically deubiquitinates 'Lys-120' of histone H2A (H2AK119Ub), a specific tag for epigenetic transcriptional repression, thereby acting as a coactivator. Deubiquitination of histone H2A is a prerequisite for subsequent phosphorylation at 'Ser-11' of histone H3 (H3S10ph), and is required for chromosome segregation when cells enter into mitosis. In resting B- and T-lymphocytes, phosphorylation by AURKB leads to enhance its activity, thereby maintaining transcription in resting lymphocytes. Regulates Hox gene expression via histone H2A deubiquitination. Prefers nucleosomal substrates. Does not deubiquitinate histone H2B. Also deubiquitinates non-histone proteins, such as ribosomal protein RPS27A: deubiquitination of monoubiquitinated RPS27A promotes maturation of the 40S ribosomal subunit. Also mediates deubiquitination of tektin proteins (TEKT1, TEKT2, TEK3, TEKT4 and TEKT5), promoting their stability. The protein is Ubiquitin carboxyl-terminal hydrolase 16 (Usp16) of Mus musculus (Mouse).